Consider the following 332-residue polypeptide: Probable allantoicase (332 aa).

It belongs to the allantoicase family.

The catalysed reaction is allantoate + H2O = (S)-ureidoglycolate + urea. The protein operates within nitrogen metabolism; (S)-allantoin degradation; (S)-ureidoglycolate from allantoate (aminidohydrolase route): step 1/1. In Pseudomonas paraeruginosa (strain DSM 24068 / PA7) (Pseudomonas aeruginosa (strain PA7)), this protein is Probable allantoicase.